The following is a 145-amino-acid chain: Transcription antitermination protein NusB (145 aa).

The protein belongs to the NusB family.

Involved in transcription antitermination. Required for transcription of ribosomal RNA (rRNA) genes. Binds specifically to the boxA antiterminator sequence of the ribosomal RNA (rrn) operons. The polypeptide is Transcription antitermination protein NusB (Burkholderia lata (strain ATCC 17760 / DSM 23089 / LMG 22485 / NCIMB 9086 / R18194 / 383)).